A 180-amino-acid polypeptide reads, in one-letter code: ATP-dependent protease subunit HslV (180 aa).

Thr-6 is a catalytic residue. Na(+) is bound by residues Ala-164, Cys-167, and Thr-170.

The protein belongs to the peptidase T1B family. HslV subfamily. As to quaternary structure, a double ring-shaped homohexamer of HslV is capped on each side by a ring-shaped HslU homohexamer. The assembly of the HslU/HslV complex is dependent on binding of ATP.

It localises to the cytoplasm. The catalysed reaction is ATP-dependent cleavage of peptide bonds with broad specificity.. Its activity is regulated as follows. Allosterically activated by HslU binding. In terms of biological role, protease subunit of a proteasome-like degradation complex believed to be a general protein degrading machinery. This Borrelia recurrentis (strain A1) protein is ATP-dependent protease subunit HslV.